Here is a 594-residue protein sequence, read N- to C-terminus: MAAGDLLLRTQSGLPVLARAFPSCLCLRVPARRRRGAPPLTAAKVDVADAVGRRVRSGGAAVPKRRRSRRDAEEEEEEGLAFSRVVTGRGRGVREEGVAEGEAPEFDAAKSGDESGGVDGSYLSDTRFDQCTISPLSLKAVKDAGYERMTQVQEATLPVILQGKDVLAKAKTGTGKTVAFLLPAIEVLSALPNSRRDQLRPSINLLVMCPTRELAIQVAVEAKKLLKYHRSLGVQVVIGGTRLTQEQRSMQANPCQILVATPGRLKDHVENTPGFSTRLKGVKVLVLDEADRLLDMGFRRDIERIIASVPKERQTLLFSATVPEEVRQISHIAMKKNYKFINTVKDGDEETHAQVSQMFMIAPLDLHFSILYDVLKKHVAEDADYKVIIFCTTAMVTKLVAEILSQLRLNIREIHSRKSQSARTKVSDEFRKSRGLILVSSDVSARGVDYPDVTLVIQVGVPADRQQYIHRLGRTGRKGKEGQGLLLLAPWEKYFLSSIKDLSISEATVPSVDSSTQTIVKDAVRKVEMRSKECAYQAWLGYYNSNKTIGREKSRLVKLAEEFSQSMELSVPPAIPKQILRKMGLNNVPGLRST.

Disordered stretches follow at residues 56–80 (RSGG…EEGL) and 92–121 (GVRE…VDGS). Residues 126-154 (TRFDQCTISPLSLKAVKDAGYERMTQVQE) carry the Q motif motif. The region spanning 157–340 (LPVILQGKDV…HIAMKKNYKF (184 aa)) is the Helicase ATP-binding domain. Residue 170 to 177 (AKTGTGKT) coordinates ATP. Positions 288 to 291 (DEAD) match the DEAD box motif. A Helicase C-terminal domain is found at 370–520 (ILYDVLKKHV…SVDSSTQTIV (151 aa)).

Belongs to the DEAD box helicase family.

It carries out the reaction ATP + H2O = ADP + phosphate + H(+). This chain is DEAD-box ATP-dependent RNA helicase 25, found in Oryza sativa subsp. japonica (Rice).